Consider the following 275-residue polypeptide: Lincomycin biosynthesis protein LmbN (275 aa).

In terms of domain architecture, Carrier spans 1–78 (MSTLDEVLAL…AIAATVARIT (78 aa)). An O-(pantetheine 4'-phosphoryl)serine modification is found at S37. Residues 113–275 (LFDTWHAGGT…HHALCVAHAP (163 aa)) enclose the SIS domain.

The protein operates within antibiotic biosynthesis; lincomycin biosynthesis. The chain is Lincomycin biosynthesis protein LmbN (lmbN) from Streptomyces lincolnensis.